We begin with the raw amino-acid sequence, 179 residues long: ATP synthase subunit delta (179 aa).

It belongs to the ATPase delta chain family. In terms of assembly, F-type ATPases have 2 components, F(1) - the catalytic core - and F(0) - the membrane proton channel. F(1) has five subunits: alpha(3), beta(3), gamma(1), delta(1), epsilon(1). F(0) has three main subunits: a(1), b(2) and c(10-14). The alpha and beta chains form an alternating ring which encloses part of the gamma chain. F(1) is attached to F(0) by a central stalk formed by the gamma and epsilon chains, while a peripheral stalk is formed by the delta and b chains.

The protein localises to the cell membrane. Its function is as follows. F(1)F(0) ATP synthase produces ATP from ADP in the presence of a proton or sodium gradient. F-type ATPases consist of two structural domains, F(1) containing the extramembraneous catalytic core and F(0) containing the membrane proton channel, linked together by a central stalk and a peripheral stalk. During catalysis, ATP synthesis in the catalytic domain of F(1) is coupled via a rotary mechanism of the central stalk subunits to proton translocation. This protein is part of the stalk that links CF(0) to CF(1). It either transmits conformational changes from CF(0) to CF(1) or is implicated in proton conduction. In Clostridium botulinum (strain Langeland / NCTC 10281 / Type F), this protein is ATP synthase subunit delta.